The primary structure comprises 56 residues: Large ribosomal subunit protein bL33 (56 aa).

It belongs to the bacterial ribosomal protein bL33 family.

This is Large ribosomal subunit protein bL33 from Ehrlichia canis (strain Jake).